A 207-amino-acid chain; its full sequence is A-type ATP synthase subunit E (207 aa).

The protein belongs to the V-ATPase E subunit family. Has multiple subunits with at least A(3), B(3), C, D, E, F, H, I and proteolipid K(x).

The protein resides in the cell membrane. In terms of biological role, component of the A-type ATP synthase that produces ATP from ADP in the presence of a proton gradient across the membrane. The chain is A-type ATP synthase subunit E from Methanosphaera stadtmanae (strain ATCC 43021 / DSM 3091 / JCM 11832 / MCB-3).